The following is a 69-amino-acid chain: Cytochrome c oxidase subunit 8A, mitochondrial (69 aa).

The transit peptide at 1–25 (MYVVTPLLLRGLTGSARRLPVPRAQ) directs the protein to the mitochondrion. The SIFI-degron motif lies at 2-19 (YVVTPLLLRGLTGSARRL). The Mitochondrial matrix segment spans residues 26–36 (VHSMPPEQKLG). Residues 37 to 60 (VLELAIGFTSCMVTFLLPAGWIMS) traverse the membrane as a helical segment. Residues 61-69 (HLESYKKRG) lie on the Mitochondrial intermembrane side of the membrane.

The protein belongs to the cytochrome c oxidase VIII family. In terms of assembly, component of the cytochrome c oxidase (complex IV, CIV), a multisubunit enzyme composed of 14 subunits. The complex is composed of a catalytic core of 3 subunits MT-CO1, MT-CO2 and MT-CO3, encoded in the mitochondrial DNA, and 11 supernumerary subunits COX4I, COX5A, COX5B, COX6A, COX6B, COX6C, COX7A, COX7B, COX7C, COX8 and NDUFA4, which are encoded in the nuclear genome. The complex exists as a monomer or a dimer and forms supercomplexes (SCs) in the inner mitochondrial membrane with NADH-ubiquinone oxidoreductase (complex I, CI) and ubiquinol-cytochrome c oxidoreductase (cytochrome b-c1 complex, complex III, CIII), resulting in different assemblies (supercomplex SCI(1)III(2)IV(1) and megacomplex MCI(2)III(2)IV(2)). Post-translationally, in response to mitochondrial stress, the precursor protein is ubiquitinated by the SIFI complex in the cytoplasm before mitochondrial import, leading to its degradation. Within the SIFI complex, UBR4 initiates ubiquitin chain that are further elongated or branched by KCMF1.

Its subcellular location is the mitochondrion inner membrane. It functions in the pathway energy metabolism; oxidative phosphorylation. Component of the cytochrome c oxidase, the last enzyme in the mitochondrial electron transport chain which drives oxidative phosphorylation. The respiratory chain contains 3 multisubunit complexes succinate dehydrogenase (complex II, CII), ubiquinol-cytochrome c oxidoreductase (cytochrome b-c1 complex, complex III, CIII) and cytochrome c oxidase (complex IV, CIV), that cooperate to transfer electrons derived from NADH and succinate to molecular oxygen, creating an electrochemical gradient over the inner membrane that drives transmembrane transport and the ATP synthase. Cytochrome c oxidase is the component of the respiratory chain that catalyzes the reduction of oxygen to water. Electrons originating from reduced cytochrome c in the intermembrane space (IMS) are transferred via the dinuclear copper A center (CU(A)) of subunit 2 and heme A of subunit 1 to the active site in subunit 1, a binuclear center (BNC) formed by heme A3 and copper B (CU(B)). The BNC reduces molecular oxygen to 2 water molecules using 4 electrons from cytochrome c in the IMS and 4 protons from the mitochondrial matrix. This is Cytochrome c oxidase subunit 8A, mitochondrial (COX8A) from Ateles belzebuth (White-bellied spider monkey).